Reading from the N-terminus, the 283-residue chain is Bifunctional protein FolD (283 aa).

Residues 163–165, serine 188, and isoleucine 229 each bind NADP(+); that span reads GRS.

The protein belongs to the tetrahydrofolate dehydrogenase/cyclohydrolase family. Homodimer.

The catalysed reaction is (6R)-5,10-methylene-5,6,7,8-tetrahydrofolate + NADP(+) = (6R)-5,10-methenyltetrahydrofolate + NADPH. It carries out the reaction (6R)-5,10-methenyltetrahydrofolate + H2O = (6R)-10-formyltetrahydrofolate + H(+). The protein operates within one-carbon metabolism; tetrahydrofolate interconversion. Functionally, catalyzes the oxidation of 5,10-methylenetetrahydrofolate to 5,10-methenyltetrahydrofolate and then the hydrolysis of 5,10-methenyltetrahydrofolate to 10-formyltetrahydrofolate. The polypeptide is Bifunctional protein FolD (Campylobacter concisus (strain 13826)).